Consider the following 219-residue polypeptide: Inner membrane protein YghB (219 aa).

Topologically, residues 1–17 (MAVIQDIIAALWQHDFA) are cytoplasmic. A helical transmembrane segment spans residues 18-38 (ALANPHVVSVVYFVMFATLFL). At 39–67 (ENGLLPASFLPGDSLLLLAGALIAQDVMH) the chain is on the periplasmic side. The chain crosses the membrane as a helical span at residues 68–88 (FLPTIGILTAAASLGCWLSYI). The Cytoplasmic segment spans residues 89 to 160 (QGRWLGNTRT…RRFQFFNWLS (72 aa)). The helical transmembrane segment at 161–181 (GLLWVTVVTSFGYALSMIPFV) threads the bilayer. The Periplasmic segment spans residues 182–191 (KRHEDQVMTF). The helical transmembrane segment at 192 to 212 (LMILPVALLVAGLLGTLVVVI) threads the bilayer. The Cytoplasmic portion of the chain corresponds to 213–219 (KKKYCNA).

It belongs to the DedA family.

The protein localises to the cell inner membrane. This chain is Inner membrane protein YghB (yghB), found in Salmonella typhimurium (strain LT2 / SGSC1412 / ATCC 700720).